Consider the following 497-residue polypeptide: Serine hydroxymethyltransferase (497 aa).

Residues Leu-176 and 180 to 182 each bind (6S)-5,6,7,8-tetrahydrofolate; that span reads GHL. Residue Lys-289 is modified to N6-(pyridoxal phosphate)lysine. Glu-306 is a binding site for (6S)-5,6,7,8-tetrahydrofolate.

The protein belongs to the SHMT family. In terms of assembly, homodimer. Pyridoxal 5'-phosphate serves as cofactor.

The protein localises to the cytoplasm. It carries out the reaction (6R)-5,10-methylene-5,6,7,8-tetrahydrofolate + glycine + H2O = (6S)-5,6,7,8-tetrahydrofolate + L-serine. Its pathway is one-carbon metabolism; tetrahydrofolate interconversion. It functions in the pathway amino-acid biosynthesis; glycine biosynthesis; glycine from L-serine: step 1/1. In terms of biological role, catalyzes the reversible interconversion of serine and glycine with tetrahydrofolate (THF) serving as the one-carbon carrier. This reaction serves as the major source of one-carbon groups required for the biosynthesis of purines, thymidylate, methionine, and other important biomolecules. Also exhibits THF-independent aldolase activity toward beta-hydroxyamino acids, producing glycine and aldehydes, via a retro-aldol mechanism. In Chlamydia pneumoniae (Chlamydophila pneumoniae), this protein is Serine hydroxymethyltransferase.